The primary structure comprises 289 residues: MEANVTIPIWQNKPHGAARSVVRRIGTNLPLKPCPRASFETLPNISDLCLRDVPPVPTLADIAWIAADEEETYARVRSDTRPLRHTWKPSPLIVMQRNASVPNLRGSEERLLALKKPALPALSRTTELQDELSHLRSQIAKIVAADAASASLTPDFLSPGSSNVSSPLPCFGSSFHSTTSFVISDITEETEIEVPELPSVPLLCSASPECCKPEHKATCSSSEEDDCVSLSKASSFADMMGILKDFHRMKQSQDLSRSSLKEEDPAVLISEVLRRKFALKEEDISRKGN.

Threonine 27 bears the Phosphothreonine mark. A phosphoserine mark is found at serine 38, serine 100, serine 107, serine 221, serine 222, serine 235, serine 258, and serine 270.

The protein belongs to the MTFR1 family. In terms of processing, phosphorylated by AMPK. Upon stress, phosphorylation by AMPK is sufficient to induce mitochondrial fragmentation.

The protein localises to the mitochondrion outer membrane. Functionally, mitochondrial protein required for adaptation of miochondrial dynamics to metabolic changes. Regulates mitochondrial morphology at steady state and mediates AMPK-dependent stress-induced mitochondrial fragmentation via the control of OPA1 levels. The polypeptide is Mitochondrial fission regulator 1-like (MTFR1L) (Bos taurus (Bovine)).